The following is a 521-amino-acid chain: Leucine-rich repeat-containing protein 24 (521 aa).

A signal peptide spans 1–23; that stretch reads MALRAPTLLLLLLGLLLLPLLPG. One can recognise an LRRNT domain in the interval 24 to 58; it reads LPPRATGCPAACRCYSATVECGALRLRVVPPGIPP. LRR repeat units lie at residues 59–80, 83–104, 107–128, 131–152, 155–176, and 179–200; these read GTQT…SLAP, ALRH…AFRA, RLLE…AFVG, QLRV…TFLH, RLQE…ALAG, and SLAL…ALQP. N-linked (GlcNAc...) asparagine glycosylation is present at N91. The LRRCT domain maps to 212–267; it reads NPWRCDCALHWLGSWIKEGGRRLLSSRDKKITCAEPPRLALQSLLEVSGGSLICIP. The 104-residue stretch at 268–371 folds into the Ig-like C2-type domain; it reads PSVNVEPPEF…ARVPFHLLVN (104 aa). A disulfide bond links C289 and C353. Positions 306-330 are disordered; the sequence is QPRDGKPQAQAQLEGGAPGLGGHGT. N-linked (GlcNAc...) asparagine glycosylation is found at N342 and N371. The interval 374 to 395 is disordered; sequence RQQSQQLPDPQAPATRPVGHEP. The chain crosses the membrane as a helical span at residues 414-434; that stretch reads AITAAIALLALTALLLAAMIC.

It is found in the membrane. The polypeptide is Leucine-rich repeat-containing protein 24 (Lrrc24) (Mus musculus (Mouse)).